Reading from the N-terminus, the 649-residue chain is tRNA-guanine(15) transglycosylase (649 aa).

Aspartate 88 functions as the Nucleophile in the catalytic mechanism. Residues aspartate 123 and alanine 194 each contribute to the substrate site. 3 residues coordinate Zn(2+): cysteine 280, cysteine 282, and cysteine 285. The PUA domain occupies 573–648 (KYRIVIDSSV…VAATLRGGLK (76 aa)).

The protein belongs to the archaeosine tRNA-ribosyltransferase family. It depends on Zn(2+) as a cofactor.

It carries out the reaction guanosine(15) in tRNA + 7-cyano-7-deazaguanine = 7-cyano-7-carbaguanosine(15) in tRNA + guanine. It functions in the pathway tRNA modification; archaeosine-tRNA biosynthesis. Functionally, exchanges the guanine residue with 7-cyano-7-deazaguanine (preQ0) at position 15 in the dihydrouridine loop (D-loop) of archaeal tRNAs. The protein is tRNA-guanine(15) transglycosylase of Methanococcus maripaludis (strain C6 / ATCC BAA-1332).